The chain runs to 750 residues: Photosystem I P700 chlorophyll a apoprotein A1 (750 aa).

8 helical membrane-spanning segments follow: residues 70–93 (VFSA…FHGA), 156–179 (LYCT…FHYH), 195–219 (LNHH…HVSL), 291–309 (IAHH…GHMY), 346–369 (WHAQ…HHMY), 385–411 (LSLF…IFMV), 433–455 (AIIS…LYIH), and 531–549 (FLVH…LILL). [4Fe-4S] cluster contacts are provided by Cys573 and Cys582. The next 2 helical transmembrane spans lie at 589 to 610 (HVFL…HFSW) and 664 to 686 (LSAY…MFLF). His675 serves as a coordination point for chlorophyll a'. Residues Met683 and Tyr691 each coordinate chlorophyll a. Residue Trp692 participates in phylloquinone binding. The chain crosses the membrane as a helical span at residues 724 to 744 (AVGVTHYLLGGIATTWAFFLA).

It belongs to the PsaA/PsaB family. As to quaternary structure, the PsaA/B heterodimer binds the P700 chlorophyll special pair and subsequent electron acceptors. PSI consists of a core antenna complex that captures photons, and an electron transfer chain that converts photonic excitation into a charge separation. The eukaryotic PSI reaction center is composed of at least 11 subunits. P700 is a chlorophyll a/chlorophyll a' dimer, A0 is one or more chlorophyll a, A1 is one or both phylloquinones and FX is a shared 4Fe-4S iron-sulfur center. is required as a cofactor.

It is found in the plastid. It localises to the chloroplast thylakoid membrane. The catalysed reaction is reduced [plastocyanin] + hnu + oxidized [2Fe-2S]-[ferredoxin] = oxidized [plastocyanin] + reduced [2Fe-2S]-[ferredoxin]. Functionally, psaA and PsaB bind P700, the primary electron donor of photosystem I (PSI), as well as the electron acceptors A0, A1 and FX. PSI is a plastocyanin-ferredoxin oxidoreductase, converting photonic excitation into a charge separation, which transfers an electron from the donor P700 chlorophyll pair to the spectroscopically characterized acceptors A0, A1, FX, FA and FB in turn. Oxidized P700 is reduced on the lumenal side of the thylakoid membrane by plastocyanin. This chain is Photosystem I P700 chlorophyll a apoprotein A1, found in Amborella trichopoda.